Consider the following 338-residue polypeptide: Glycerol-3-phosphate dehydrogenase [NAD(P)+] (338 aa).

Residues serine 14, tyrosine 15, histidine 35, and lysine 109 each coordinate NADPH. The sn-glycerol 3-phosphate site is built by lysine 109, glycine 138, and threonine 140. NADPH is bound at residue alanine 142. Sn-glycerol 3-phosphate contacts are provided by lysine 194, aspartate 247, serine 257, arginine 258, and asparagine 259. Lysine 194 acts as the Proton acceptor in catalysis. Residue arginine 258 participates in NADPH binding. NADPH-binding residues include valine 282 and glutamate 284.

The protein belongs to the NAD-dependent glycerol-3-phosphate dehydrogenase family.

Its subcellular location is the cytoplasm. The catalysed reaction is sn-glycerol 3-phosphate + NAD(+) = dihydroxyacetone phosphate + NADH + H(+). It carries out the reaction sn-glycerol 3-phosphate + NADP(+) = dihydroxyacetone phosphate + NADPH + H(+). Its pathway is membrane lipid metabolism; glycerophospholipid metabolism. Its function is as follows. Catalyzes the reduction of the glycolytic intermediate dihydroxyacetone phosphate (DHAP) to sn-glycerol 3-phosphate (G3P), the key precursor for phospholipid synthesis. The protein is Glycerol-3-phosphate dehydrogenase [NAD(P)+] of Sodalis glossinidius (strain morsitans).